A 246-amino-acid chain; its full sequence is tRNA (guanine-N(7)-)-methyltransferase (246 aa).

A disordered region spans residues 1–23 (MIESSSPTPPALHEGAPADVSHP). Glu75, Glu100, Asp127, and Asp150 together coordinate S-adenosyl-L-methionine. Asp150 is an active-site residue. Residue Lys154 participates in substrate binding. The interval 156–161 (KHNKRR) is interaction with RNA. Residues Asp186 and 225 to 228 (TKFE) contribute to the substrate site.

Belongs to the class I-like SAM-binding methyltransferase superfamily. TrmB family.

It carries out the reaction guanosine(46) in tRNA + S-adenosyl-L-methionine = N(7)-methylguanosine(46) in tRNA + S-adenosyl-L-homocysteine. It participates in tRNA modification; N(7)-methylguanine-tRNA biosynthesis. Its function is as follows. Catalyzes the formation of N(7)-methylguanine at position 46 (m7G46) in tRNA. The polypeptide is tRNA (guanine-N(7)-)-methyltransferase (Polaromonas naphthalenivorans (strain CJ2)).